Reading from the N-terminus, the 854-residue chain is Nucleolar MIF4G domain-containing protein 1 (854 aa).

The necessary for nucleolar localization and for targeting PPP1CA to the nucleolus stretch occupies residues 2–275 (PRNVPEVNGV…EEDPDWQVLQ (274 aa)). Ser60 is modified (phosphoserine). Disordered regions lie at residues 66-215 (ESRS…PLSF) and 231-333 (SGGG…GEKY). Residues 76-99 (PGGRKSRKELRKEKRHLRKARRLQ) are compositionally biased toward basic residues. Gly residues predominate over residues 104 to 113 (SGSGDQGGNV). Residues 128-173 (VRPTPAKATATPAKASAPSTNTKASAAQPKAKAKGAPGKPGPATAT) are compositionally biased toward low complexity. Over residues 188-197 (REIRKLERCL) the composition is skewed to basic and acidic residues. Residues 265 to 280 (SEEDPDWQVLQEDQED) are compositionally biased toward acidic residues. 3 stretches are compositionally biased toward basic and acidic residues: residues 281-291 (VNSKRRGEAES), 303-315 (RFAE…RSSS), and 322-331 (QESHSVESGE). Residues 301–304 (KVRF) carry the Required for efficient binding to PPP1CA and for targeting PPP1CA to the nucleolus motif. Residues Ser311, Ser314, and Ser315 each carry the phosphoserine modification. The MIF4G domain maps to 356–553 (KKHVKGLINR…ETMLALKNND (198 aa)). The 117-residue stretch at 648 to 764 (DVRRIIFCTL…PLSVLKVVEF (117 aa)) folds into the MI domain.

This sequence belongs to the CWC22 family. May interact with EIF4A1, EIF4A2 and EIF4A3. Interacts with PPP1CA and PPP1CC.

Its subcellular location is the nucleus. It localises to the nucleolus. In terms of biological role, plays a role in targeting PPP1CA to the nucleolus. This Mus musculus (Mouse) protein is Nucleolar MIF4G domain-containing protein 1 (Nom1).